An 83-amino-acid chain; its full sequence is UPF0147 protein TK2131 (83 aa).

Belongs to the UPF0147 family.

The sequence is that of UPF0147 protein TK2131 from Thermococcus kodakarensis (strain ATCC BAA-918 / JCM 12380 / KOD1) (Pyrococcus kodakaraensis (strain KOD1)).